A 394-amino-acid chain; its full sequence is Candidapepsin (394 aa).

The first 23 residues, 1-23, serve as a signal peptide directing secretion; the sequence is MATIFLFTKNVFIALAFALFAQG. A propeptide spans 24–60 (activation peptide); the sequence is LTIPDGIEKRTDKVVSLDFTVIRKPFNATAHRLIQKR. Residue Asn50 is glycosylated (N-linked (GlcNAc...) asparagine). A Peptidase A1 domain is found at 74 to 381; it reads YAADIVVGSN…DLDDKTISLA (308 aa). Residue Asp92 is part of the active site. Residues Cys107 and Cys119 are joined by a disulfide bond. Residue Asp278 is part of the active site. The cysteines at positions 314 and 347 are disulfide-linked.

Belongs to the peptidase A1 family. In terms of processing, O-glycosylated.

It is found in the secreted. The catalysed reaction is Preferential cleavage at the carboxyl of hydrophobic amino acids, but fails to cleave 15-Leu-|-Tyr-16, 16-Tyr-|-Leu-17 and 24-Phe-|-Phe-25 of insulin B chain. Activates trypsinogen, and degrades keratin.. This chain is Candidapepsin (SAPT1), found in Candida tropicalis (Yeast).